Consider the following 309-residue polypeptide: NAD kinase (309 aa).

The Proton acceptor role is filled by aspartate 89. NAD(+) contacts are provided by residues 89-90, 163-164, histidine 174, arginine 191, aspartate 193, and 204-209; these read DG, NE, and TAYSLS.

The protein belongs to the NAD kinase family. Requires a divalent metal cation as cofactor.

Its subcellular location is the cytoplasm. The enzyme catalyses NAD(+) + ATP = ADP + NADP(+) + H(+). Involved in the regulation of the intracellular balance of NAD and NADP, and is a key enzyme in the biosynthesis of NADP. Catalyzes specifically the phosphorylation on 2'-hydroxyl of the adenosine moiety of NAD to yield NADP. The sequence is that of NAD kinase from Shewanella denitrificans (strain OS217 / ATCC BAA-1090 / DSM 15013).